A 136-amino-acid chain; its full sequence is MARTKQTARKSTGGKAPRKQLASKAARKSAPVSGGVKKPHRYKPGTVALREIRRFQKSTELLIRKLPFQRLVREIAQDFKSDLRFQSSAIGALQEAVEAYLVGLFEDTNLCAIHAKRVTIQKKDMQLARRLRGERS.

A disordered region spans residues 1–42 (MARTKQTARKSTGGKAPRKQLASKAARKSAPVSGGVKKPHRY). Lys-5 carries the post-translational modification N6,N6,N6-trimethyllysine; alternate. Position 5 is an N6,N6-dimethyllysine; alternate (Lys-5). Residues Lys-5 and Lys-10 each carry the N6-methyllysine; alternate modification. N6-acetyllysine; alternate is present on Lys-10. Ser-11 carries the post-translational modification Phosphoserine. Position 15 is an N6,N6-dimethyllysine; alternate (Lys-15). N6-acetyllysine; alternate is present on residues Lys-15, Lys-19, Lys-24, Lys-28, and Lys-37. An N6-methyllysine; alternate mark is found at Lys-19, Lys-24, Lys-28, and Lys-37. N6,N6,N6-trimethyllysine; alternate is present on residues Lys-28 and Lys-37. 2 positions are modified to N6,N6-dimethyllysine; alternate: Lys-28 and Lys-37. An N6-acetyllysine mark is found at Lys-57 and Lys-65. An N6,N6,N6-trimethyllysine; alternate modification is found at Lys-80. An N6,N6-dimethyllysine; alternate modification is found at Lys-80. At Lys-80 the chain carries N6-methyllysine; alternate.

It belongs to the histone H3 family. The nucleosome is a histone octamer containing two molecules each of H2A, H2B, H3 and H4 assembled in one H3-H4 heterotetramer and two H2A-H2B heterodimers. The octamer wraps approximately 147 bp of DNA. Phosphorylated by IPL1 to form H3S10ph. H3S10ph promotes subsequent H3K14ac formation and is required for transcriptional activation through TBP recruitment to the promoters. In terms of processing, mono-, di- and trimethylated by the COMPASS complex to form H3K4me1/2/3. H3K4me activates gene expression by regulating transcription elongation and plays a role in telomere length maintenance. H3K4me enrichment correlates with transcription levels, and occurs in a 5' to 3' gradient with H3K4me3 enrichment at the 5'-end of genes, shifting to H3K4me2 and then H3K4me1. Methylated by SET2 to form H3K36me. H3K36me represses gene expression. Methylated by DOT1 to form H3K79me. H3K79me is required for association of SIR proteins with telomeric regions and for telomeric silencing. The COMPASS-mediated formation of H3K4me2/3 and the DOT1-mediated formation of H3K79me require H2BK123ub1. Post-translationally, acetylation of histone H3 leads to transcriptional activation. H3K14ac formation by GCN5 is promoted by H3S10ph. H3K14ac can also be formed by ESA1. H3K56ac formation occurs predominantly in newly synthesized H3 molecules during G1, S and G2/M of the cell cycle and may be involved in DNA repair.

It localises to the nucleus. The protein localises to the chromosome. Functionally, core component of nucleosome. Nucleosomes wrap and compact DNA into chromatin, limiting DNA accessibility to the cellular machineries which require DNA as a template. Histones thereby play a central role in transcription regulation, DNA repair, DNA replication and chromosomal stability. DNA accessibility is regulated via a complex set of post-translational modifications of histones, also called histone code, and nucleosome remodeling. The chain is Histone H3.3 (HHT3) from Candida albicans (strain SC5314 / ATCC MYA-2876) (Yeast).